Consider the following 303-residue polypeptide: Methionyl-tRNA formyltransferase (303 aa).

Position 108–111 (108–111 (SDLP)) interacts with (6S)-5,6,7,8-tetrahydrofolate.

Belongs to the Fmt family.

It catalyses the reaction L-methionyl-tRNA(fMet) + (6R)-10-formyltetrahydrofolate = N-formyl-L-methionyl-tRNA(fMet) + (6S)-5,6,7,8-tetrahydrofolate + H(+). Functionally, attaches a formyl group to the free amino group of methionyl-tRNA(fMet). The formyl group appears to play a dual role in the initiator identity of N-formylmethionyl-tRNA by promoting its recognition by IF2 and preventing the misappropriation of this tRNA by the elongation apparatus. The polypeptide is Methionyl-tRNA formyltransferase (Rickettsia typhi (strain ATCC VR-144 / Wilmington)).